The sequence spans 280 residues: MAAAINAAVPSPPVAPSAPPPPPPPLGQASDRFPSLVLELVFSYLDLPDLRSCGLVCKRWYRCLHGDKNSDVWRSLCCRIVSEEALRTDILCNLRTYKAKVRAFQHGLSSSDCSRNVFIKKNGFTLHRNPIAQSTDGARTKIGFSEGRHAWEVWWEGPLGTVAVIGIATKQAPMQCQGYVALLGSDDQSWGWNLVDNNLLHNGEVNGSFPQCNNAPKYQIGERIRVILDMEDKTLAFERGYEYLGVAFRGLPKACLYPAVSAVYGNTEVTLVYLGKPLDG.

The segment at 1–28 (MAAAINAAVPSPPVAPSAPPPPPPPLGQ) is disordered. Positions 10 to 26 (PSPPVAPSAPPPPPPPL) are enriched in pro residues. In terms of domain architecture, F-box spans 27 to 76 (GQASDRFPSLVLELVFSYLDLPDLRSCGLVCKRWYRCLHGDKNSDVWRSL). The B30.2/SPRY domain occupies 86–278 (LRTDILCNLR…VTLVYLGKPL (193 aa)).

It belongs to the FBXO45/Fsn family. Probable component of a E3 ubiquitin ligase complex.

The protein operates within protein modification; protein ubiquitination. The protein is F-box/SPRY domain-containing protein 1 (fbxo45) of Xenopus laevis (African clawed frog).